The primary structure comprises 270 residues: Small ribosomal subunit protein eS1 (270 aa).

Residues 235–270 (GTSKGGAASTAAVAKGEEGVKVDRPEGYEPPVLETV) form a disordered region. Residues 239–248 (GGAASTAAVA) are compositionally biased toward low complexity. A compositionally biased stretch (basic and acidic residues) spans 249–261 (KGEEGVKVDRPEG).

The protein belongs to the eukaryotic ribosomal protein eS1 family. As to quaternary structure, component of the small ribosomal subunit. Mature ribosomes consist of a small (40S) and a large (60S) subunit. The 40S subunit contains about 33 different proteins and 1 molecule of RNA (18S). The 60S subunit contains about 49 different proteins and 3 molecules of RNA (28S, 5.8S and 5S).

It is found in the cytoplasm. This chain is Small ribosomal subunit protein eS1, found in Ixodes scapularis (Black-legged tick).